The primary structure comprises 306 residues: Methylated RNA-binding protein 1 (306 aa).

One can recognise a YTH domain in the interval 155-290; sequence SRFFVIKSSS…SIGISIINLF (136 aa). RNA-binding positions include 161–163, N207, and W231; that span reads KSS.

In terms of biological role, RNA-binding protein that acts as a post-transcriptional regulator of phosphate metabolism by binding to the 3'-UTR region of PHO4 mRNA, decreasing its stability. Acts by recognizing and binding N6-methyladenosine (m6A)-containing RNAs, a modification present at internal sites of mRNAs and some non-coding RNAs. The chain is Methylated RNA-binding protein 1 from Saccharomyces cerevisiae (strain ATCC 204508 / S288c) (Baker's yeast).